A 255-amino-acid polypeptide reads, in one-letter code: Small ribosomal subunit protein eS1 (255 aa).

The residue at position 2 (alanine 2) is an N-acetylalanine; partial.

Belongs to the eukaryotic ribosomal protein eS1 family. Component of the small ribosomal subunit. Mature ribosomes consist of a small (40S) and a large (60S) subunit. The 40S subunit contains about 33 different proteins and 1 molecule of RNA (18S). The 60S subunit contains about 49 different proteins and 3 molecules of RNA (25S, 5.8S and 5S).

Its subcellular location is the cytoplasm. In Kluyveromyces lactis (strain ATCC 8585 / CBS 2359 / DSM 70799 / NBRC 1267 / NRRL Y-1140 / WM37) (Yeast), this protein is Small ribosomal subunit protein eS1.